The primary structure comprises 3477 residues: Abnormal spindle-like microcephaly-associated protein (3477 aa).

Positions 1-30 (MANRRVGRGCWEVSPTERRPPAGLRGPAAE) are disordered. Phosphoserine is present on residues Ser280, Ser283, Ser367, and Ser392. The tract at residues 308 to 409 (ITQSQIHFLS…NMAYMCTSQQ (102 aa)) is sufficient for interaction with KATNA1:KATNB1. Polar residues predominate over residues 415–424 (LSNENSQVPQ). 2 disordered regions span residues 415–443 (LSNE…ECQG) and 559–581 (KNEV…DGSM). Position 425 is a phosphoserine (Ser425). Residues 560-570 (NEVTPSSTTAS) are compositionally biased toward polar residues. Residue Ser605 is modified to Phosphoserine. One can recognise a Calponin-homology (CH) 1 domain in the interval 920-1056 (KASKEILLAF…LLWKIAFAFQ (137 aa)). Residues 1057-1078 (VDISLNLDQLKEEIAFLKHTKS) are a coiled coil. Ser1103 is subject to Phosphoserine. Positions 1110-1261 (SENIKLLMDW…YLSFLCARLL (152 aa)) constitute a Calponin-homology (CH) 2 domain. 39 consecutive IQ domains span residues 1347–1378 (QNKA…IILQ), 1393–1422 (YLWA…MLKS), 1582–1613 (LKKT…VIIQ), 1632–1661 (TRSA…SVIK), 1655–1684 (ILTS…ATIK), 1728–1757 (MRES…AVIS), 1751–1782 (QRKA…IVIQ), 1801–1830 (VKKA…AALK), 1824–1853 (QSIA…SIIK), 1874–1903 (TKAA…AALK), 1897–1928 (EHQA…LVIQ), 1947–1978 (LRHA…IIIQ), 1970–2001 (QHKC…LLIQ), 2020–2049 (TKAA…AAVT), 2043–2074 (CNKA…IIIQ), 2093–2124 (LKKT…TFIK), 2116–2147 (MHRA…IVIQ), 2166–2197 (ILKA…TLIQ), 2189–2218 (MQTA…ITKT), 2239–2270 (LRHS…TLIQ), 2262–2293 (MHIA…ILIQ), 2311–2342 (VQNA…TFIQ), 2334–2365 (MHRA…VVIQ), 2384–2415 (QRHS…TLIQ), 2407–2438 (MHSS…IFVQ), 2457–2488 (LRKA…VLIQ), 2530–2561 (QWHS…IVIQ), 2624–2653 (QHQA…TVVS), 2665–2696 (RTQA…TLIQ), 2688–2719 (MHRA…VVIQ), 2738–2767 (VQKS…EKMA), 2859–2890 (QKRA…VVLQ), 2909–2938 (IRSS…STIK), 2932–2963 (IKNS…KIQA), 2954–2985 (KVKA…KIIQ), 3029–3060 (RHRA…LIIQ), 3079–3110 (FKKS…RLLH), 3181–3210 (RNRA…GIIK), and 3204–3235 (FTSG…IRLS).

As to quaternary structure, interacts with KATNA1 and KATNB1; katanin complex formation KATNA1:KATNB1 is required for the association.

The protein resides in the cytoplasm. It is found in the cytoskeleton. The protein localises to the spindle. It localises to the nucleus. Its function is as follows. Involved in mitotic spindle regulation and coordination of mitotic processes. The function in regulating microtubule dynamics at spindle poles including spindle orientation, astral microtubule density and poleward microtubule flux seems to depend on the association with the katanin complex formed by KATNA1 and KATNB1. Enhances the microtubule lattice severing activity of KATNA1 by recruiting the katanin complex to microtubules. Can block microtubule minus-end growth and reversely this function can be enhanced by the katanin complex. May have a preferential role in regulating neurogenesis. The protein is Abnormal spindle-like microcephaly-associated protein (ASPM) of Homo sapiens (Human).